The sequence spans 252 residues: Imidazole glycerol phosphate synthase subunit HisF (252 aa).

Active-site residues include Asp11 and Asp130.

The protein belongs to the HisA/HisF family. Heterodimer of HisH and HisF.

It is found in the cytoplasm. It catalyses the reaction 5-[(5-phospho-1-deoxy-D-ribulos-1-ylimino)methylamino]-1-(5-phospho-beta-D-ribosyl)imidazole-4-carboxamide + L-glutamine = D-erythro-1-(imidazol-4-yl)glycerol 3-phosphate + 5-amino-1-(5-phospho-beta-D-ribosyl)imidazole-4-carboxamide + L-glutamate + H(+). Its pathway is amino-acid biosynthesis; L-histidine biosynthesis; L-histidine from 5-phospho-alpha-D-ribose 1-diphosphate: step 5/9. In terms of biological role, IGPS catalyzes the conversion of PRFAR and glutamine to IGP, AICAR and glutamate. The HisF subunit catalyzes the cyclization activity that produces IGP and AICAR from PRFAR using the ammonia provided by the HisH subunit. This is Imidazole glycerol phosphate synthase subunit HisF from Thermococcus gammatolerans (strain DSM 15229 / JCM 11827 / EJ3).